We begin with the raw amino-acid sequence, 271 residues long: Potential ATP-binding protein (271 aa).

Residue 34–41 participates in ATP binding; the sequence is GQPGVGKT.

The polypeptide is Potential ATP-binding protein (Staphylococcus aureus).